Reading from the N-terminus, the 70-residue chain is Brevinin-1MT2 (70 aa).

The first 22 residues, 1–22, serve as a signal peptide directing secretion; the sequence is MFTLKKSMLLLFFLGTINLSLC. Positions 23–44 are excised as a propeptide; sequence EQERNADEEERRDDDEMDVEVE. The cysteines at positions 64 and 70 are disulfide-linked.

Belongs to the frog skin active peptide (FSAP) family. Brevinin subfamily. As to expression, expressed by the skin glands.

Its subcellular location is the secreted. Antimicrobial peptide with activity against a variety of Gram-negative and Gram-positive bacteria and against fungi. Shows strong hemolytic activity against human erythrocytes. The sequence is that of Brevinin-1MT2 from Amolops mantzorum (Sichuan torrent frog).